Consider the following 355-residue polypeptide: MSLFDTINAGGAQLLGFAWPTVWAVVRILVVSVVILLCVAYLILWERKLIGWMHVRLGPNRVGPGGLLQPIADVLKLLLKEVIQPTAASRWLYLIAPIMTVVPAFAVWAVIPFQAEAVLANVNAGLLYAMAISSIGVYAVILAGWASNSKYAFLGAMRAAAQMVSYEISMGFALVLVLMTAGSLNLSEIVGSQQHGFFAGHGVNFLSWNWLPLLPAFVVYFISGIAETNRHPFDVVEGESEIVAGHMIDYSGMAFALFFLAEYINMIVISALAATLFLGGWDAPFEFLSFIPGIFWLVLKVFALLSVFIWVRATFPRFRYDQIMRLGWKVFLPVTVIWVVVVGCWMMSPLNIWVK.

8 helical membrane passes run 25 to 45, 91 to 111, 126 to 146, 170 to 190, 205 to 225, 253 to 273, 290 to 310, and 330 to 350; these read VVRILVVSVVILLCVAYLILW, WLYLIAPIMTVVPAFAVWAVI, LLYAMAISSIGVYAVILAGWA, MGFALVLVLMTAGSLNLSEIV, FLSWNWLPLLPAFVVYFISGI, MAFALFFLAEYINMIVISALA, FIPGIFWLVLKVFALLSVFIW, and VFLPVTVIWVVVVGCWMMSPL.

It belongs to the complex I subunit 1 family. As to quaternary structure, NDH-1 is composed of 14 different subunits. Subunits NuoA, H, J, K, L, M, N constitute the membrane sector of the complex.

Its subcellular location is the cell inner membrane. It carries out the reaction a quinone + NADH + 5 H(+)(in) = a quinol + NAD(+) + 4 H(+)(out). NDH-1 shuttles electrons from NADH, via FMN and iron-sulfur (Fe-S) centers, to quinones in the respiratory chain. The immediate electron acceptor for the enzyme in this species is believed to be ubiquinone. Couples the redox reaction to proton translocation (for every two electrons transferred, four hydrogen ions are translocated across the cytoplasmic membrane), and thus conserves the redox energy in a proton gradient. This subunit may bind ubiquinone. This Burkholderia cenocepacia (strain ATCC BAA-245 / DSM 16553 / LMG 16656 / NCTC 13227 / J2315 / CF5610) (Burkholderia cepacia (strain J2315)) protein is NADH-quinone oxidoreductase subunit H.